Reading from the N-terminus, the 271-residue chain is Mannosyl-3-phosphoglycerate phosphatase (271 aa).

Aspartate 13 functions as the Nucleophile in the catalytic mechanism. Mg(2+) contacts are provided by aspartate 13, aspartate 15, and aspartate 214.

This sequence belongs to the HAD-like hydrolase superfamily. MPGP family. Mg(2+) is required as a cofactor.

It localises to the cytoplasm. It carries out the reaction 2-O-(alpha-D-mannosyl)-3-phosphoglycerate + H2O = (2R)-2-O-(alpha-D-mannosyl)-glycerate + phosphate. The polypeptide is Mannosyl-3-phosphoglycerate phosphatase (yedP) (Shigella sonnei (strain Ss046)).